A 520-amino-acid chain; its full sequence is 2-isopropylmalate synthase (520 aa).

In terms of domain architecture, Pyruvate carboxyltransferase spans 12–274 (VVIFDTTLRD…WCNVESTMLT (263 aa)). D21, H209, H211, and N245 together coordinate Mn(2+). Positions 398 to 520 (KLTSLTVIAG…RDVPSAAAAS (123 aa)) are regulatory domain.

Belongs to the alpha-IPM synthase/homocitrate synthase family. LeuA type 1 subfamily. As to quaternary structure, homodimer. The cofactor is Mn(2+).

The protein localises to the cytoplasm. The catalysed reaction is 3-methyl-2-oxobutanoate + acetyl-CoA + H2O = (2S)-2-isopropylmalate + CoA + H(+). The protein operates within amino-acid biosynthesis; L-leucine biosynthesis; L-leucine from 3-methyl-2-oxobutanoate: step 1/4. In terms of biological role, catalyzes the condensation of the acetyl group of acetyl-CoA with 3-methyl-2-oxobutanoate (2-ketoisovalerate) to form 3-carboxy-3-hydroxy-4-methylpentanoate (2-isopropylmalate). The protein is 2-isopropylmalate synthase of Nitrobacter hamburgensis (strain DSM 10229 / NCIMB 13809 / X14).